The chain runs to 129 residues: M-zodatoxin-Lt8i (129 aa).

Residues M1 to S20 form the signal peptide. A propeptide spanning residues K21–R60 is cleaved from the precursor.

This sequence belongs to the cationic peptide 06 (cytoinsectotoxin) family. In terms of tissue distribution, expressed by the venom gland.

It localises to the secreted. Functionally, insecticidal, cytolytic and antimicrobial peptide. Forms voltage-dependent, ion-permeable channels in membranes. At high concentration causes cell membrane lysis. In Lachesana tarabaevi (Spider), this protein is M-zodatoxin-Lt8i (cit 1-6).